Consider the following 142-residue polypeptide: Large ribosomal subunit protein uL13 (142 aa).

Belongs to the universal ribosomal protein uL13 family. As to quaternary structure, part of the 50S ribosomal subunit.

Its function is as follows. This protein is one of the early assembly proteins of the 50S ribosomal subunit, although it is not seen to bind rRNA by itself. It is important during the early stages of 50S assembly. The protein is Large ribosomal subunit protein uL13 of Baumannia cicadellinicola subsp. Homalodisca coagulata.